Consider the following 723-residue polypeptide: MAAAATMAAAARELVLRAGASDMEEEEGPLGAGSGLQEPLQLGELDITSDEFILDEVDVHIQANLEDELVKEALKTGVDLRHYSKQVELELQQIEQKSIRDYIQESENIASLHNQITACDAVLERMEQMLGAFQSDLSSISCEIRTLQEQSGAMNIRLRNRQAVRGKLGELVDGLVVPSALVTAILEAPVTEPRFLEQLQELDAKAAAVREQEARGTAACADVRGVLDRLRVKAVTKIREFILQKIYSFRKPMTNYQIPQTALLKYRFFYQFLLGNERATAKEVRDEYVETLSKIYLSYYRSYVGRLMKVQYEEVAEKDDLMGVEDTAKKGFFSKPSLRSRNTIFTLGTRGAVISPAELEAPILVPHTAQRGEQRYPFEALFRSQHYALLDNSCREYLFICEFFVVSGPAAHDLFHAVMGRTLSMTLKHLESYLADCYDAIAVFLCIHIVLRFRNIAAKRDVPALDRYWEQVLALLWPRFELILEMNVQSVRSTDPQRLGGLDTRPHYITRRYAEFSSALVSINQTIPNERTLQLLGQLQVEVENFVLRVAAEFSSRKEQLVFLINNYDMMLGVLMERAADDSKEVESFQQLLNARTQEFIEELLSPPFGGLVAFVKEAEALIERGQAERLRGEEARVTQLIRGFGSSWKASVESLSQDVMRSFTNFRNGTSIIQGALTQLIQLYHRFHRVLSQPQLRALPARAELINIHHLMVELKKHKPNF.

At alanine 2 the chain carries N-acetylalanine. Coiled coils occupy residues 107 to 127 (ENIA…ERME) and 194 to 215 (RFLE…QEAR). Serine 355 bears the Phosphoserine mark.

This sequence belongs to the VPS52 family. As to quaternary structure, component of the Golgi-associated retrograde protein (GARP) complex, also called VFT (VPS fifty-three) complex, composed of VPS51, VPS52, VPS53 and VPS54. Component of the endosome-associated retrograde protein (EARP) complex, composed of VPS51, VPS52, VPS53 and VPS50/Syndetin. The EARP complex interacts with EIPR1. EIPR1 interacts with GARP complex and mediates its recruitment to the trans-Golgi network. Interacts with RAB6A and STX10. Interacts with BLTP3B. In terms of tissue distribution, ubiquitous.

It is found in the golgi apparatus. It localises to the trans-Golgi network membrane. The protein localises to the endosome membrane. Its subcellular location is the recycling endosome. Acts as a component of the GARP complex that is involved in retrograde transport from early and late endosomes to the trans-Golgi network (TGN). The GARP complex is required for the maintenance of the cycling of mannose 6-phosphate receptors between the TGN and endosomes, this cycling is necessary for proper lysosomal sorting of acid hydrolases such as CTSD. Acts as a component of the EARP complex that is involved in endocytic recycling. The EARP complex associates with Rab4-positive endosomes and promotes recycling of internalized transferrin receptor (TFRC) to the plasma membrane. The chain is Vacuolar protein sorting-associated protein 52 homolog (Vps52) from Rattus norvegicus (Rat).